The chain runs to 95 residues: Aspartyl/glutamyl-tRNA(Asn/Gln) amidotransferase subunit C (95 aa).

This sequence belongs to the GatC family. As to quaternary structure, heterotrimer of A, B and C subunits.

It catalyses the reaction L-glutamyl-tRNA(Gln) + L-glutamine + ATP + H2O = L-glutaminyl-tRNA(Gln) + L-glutamate + ADP + phosphate + H(+). The enzyme catalyses L-aspartyl-tRNA(Asn) + L-glutamine + ATP + H2O = L-asparaginyl-tRNA(Asn) + L-glutamate + ADP + phosphate + 2 H(+). Its function is as follows. Allows the formation of correctly charged Asn-tRNA(Asn) or Gln-tRNA(Gln) through the transamidation of misacylated Asp-tRNA(Asn) or Glu-tRNA(Gln) in organisms which lack either or both of asparaginyl-tRNA or glutaminyl-tRNA synthetases. The reaction takes place in the presence of glutamine and ATP through an activated phospho-Asp-tRNA(Asn) or phospho-Glu-tRNA(Gln). This is Aspartyl/glutamyl-tRNA(Asn/Gln) amidotransferase subunit C from Methylobacterium radiotolerans (strain ATCC 27329 / DSM 1819 / JCM 2831 / NBRC 15690 / NCIMB 10815 / 0-1).